The sequence spans 518 residues: Light-independent protochlorophyllide reductase subunit B (518 aa).

Residue aspartate 36 participates in [4Fe-4S] cluster binding. The active-site Proton donor is the aspartate 285. 420-421 (GL) serves as a coordination point for substrate.

The protein belongs to the ChlB/BchB/BchZ family. As to quaternary structure, protochlorophyllide reductase is composed of three subunits; BchL, BchN and BchB. Forms a heterotetramer of two BchB and two BchN subunits. The cofactor is [4Fe-4S] cluster.

The enzyme catalyses chlorophyllide a + oxidized 2[4Fe-4S]-[ferredoxin] + 2 ADP + 2 phosphate = protochlorophyllide a + reduced 2[4Fe-4S]-[ferredoxin] + 2 ATP + 2 H2O. It functions in the pathway porphyrin-containing compound metabolism; bacteriochlorophyll biosynthesis (light-independent). Component of the dark-operative protochlorophyllide reductase (DPOR) that uses Mg-ATP and reduced ferredoxin to reduce ring D of protochlorophyllide (Pchlide) to form chlorophyllide a (Chlide). This reaction is light-independent. The NB-protein (BchN-BchB) is the catalytic component of the complex. In Bradyrhizobium sp. (strain ORS 278), this protein is Light-independent protochlorophyllide reductase subunit B.